A 201-amino-acid chain; its full sequence is Recombination protein RecR (201 aa).

The segment at 59–74 (CEICGNMDTENMCRIC) adopts a C4-type zinc-finger fold. The Toprim domain maps to 82 to 177 (SIIAIVETVA…KISRLASGIP (96 aa)).

It belongs to the RecR family.

Functionally, may play a role in DNA repair. It seems to be involved in an RecBC-independent recombinational process of DNA repair. It may act with RecF and RecO. This chain is Recombination protein RecR, found in Rickettsia africae (strain ESF-5).